Consider the following 622-residue polypeptide: Peptidoglycan O-acetyltransferase OatA (622 aa).

A run of 11 helical transmembrane segments spans residues 11-31, 39-59, 81-101, 143-163, 173-193, 212-232, 237-257, 267-287, 307-327, 334-354, and 387-407; these read YVPS…AYHL, GFIG…NILL, LIPA…FFHP, LWSL…LLVF, LLKI…ILYV, LLSG…PVVP, AVLN…TAFV, GGLL…SHPA, YGIY…LEIT, AILQ…FIET, and IAGV…VLSV. Positions 412–467 are disordered; sequence EKQQTSVKTTTSTPDEKKDDKKEDKATKDKEADSNKASEQKETQKPDNKNKSAATP. The span at 413 to 424 shows a compositional bias: low complexity; it reads KQQTSVKTTTST. Over residues 425 to 461 the composition is skewed to basic and acidic residues; the sequence is PDEKKDDKKEDKATKDKEADSNKASEQKETQKPDNKN. Catalysis depends on residues Ser-480, Asp-600, and His-603.

The protein belongs to the acyltransferase 3 family.

It is found in the cell membrane. The protein resides in the secreted. The protein localises to the cell wall. Its function is as follows. Responsible for O-acetylation at the C6-hydroxyl group of N-acetylmuramyl residues, forming the corresponding N,6-O-diacetylmuramic acid of the peptidoglycan. O-acetylation of the peptidoglycan is the major determinant for lysozyme resistance. Critical for virulence and escape from innate immune response of the host. Involved at both early and later stages of listeriosis in the mouse model of infection. Required for successful host colonization and for intracellular survival of bacteria in macrophages of the infected host. Controls the production of inflammatory mediators in the liver of the infected host. Confers resistance to host antimicrobial molecules and to cell wall-targeting molecules such as beta-lactam antibiotics and bacteriocins. The chain is Peptidoglycan O-acetyltransferase OatA from Listeria monocytogenes serovar 1/2a (strain ATCC BAA-679 / EGD-e).